The primary structure comprises 462 residues: Metal cation symporter ZIP8 (462 aa).

Positions 1–19 (MAPGRAVAGLLLLAATSLG) are cleaved as a signal peptide. Topologically, residues 20-132 (HPSEGPELAF…PSLSEVWGYG (113 aa)) are extracellular. 3 N-linked (GlcNAc...) asparagine glycosylation sites follow: Asn-40, Asn-88, and Asn-96. The chain crosses the membrane as a helical span at residues 133–153 (FLSVTIINLASLLGLILTPLI). The Cytoplasmic portion of the chain corresponds to 154 to 160 (KKSYFPK). The helical transmembrane segment at 161–181 (ILTYFVGLAIGTLFSNAIFQL) threads the bilayer. Residues 182 to 191 (IPEAFGFNPK) are Extracellular-facing. Residues 192–212 (IDNYVEKAVAVFGGFYMLFFV) form a helical membrane-spanning segment. Topologically, residues 213–367 (ERTLKMLLKT…LNAGMSTRQA (155 aa)) are cytoplasmic. The short motif at 345 to 350 (EEFPHE) is the XEXPHE-motif element. A helical membrane pass occupies residues 368 to 388 (LLFNFLSACSCYVGLAFGILV). At 389 to 390 (GN) the chain is on the extracellular side. Residues 391–411 (NFAPNIIFALAGGMFLYISLA) form a helical membrane-spanning segment. The Cytoplasmic segment spans residues 412 to 431 (DMFPEMNDMLREKVTGRQTD). A helical membrane pass occupies residues 432–452 (FTFFMIQNAGMLTGFTAILLI). Residues 453–462 (TLYAGDIELQ) lie on the Extracellular side of the membrane.

It belongs to the ZIP transporter (TC 2.A.5) family. Homodimer. Post-translationally, N-glycosylated. N-glycosylation is not required for proper iron and zinc transport. In terms of tissue distribution, ubiquitously expressed.

It is found in the cell membrane. Its subcellular location is the apical cell membrane. The protein resides in the basolateral cell membrane. It localises to the lysosome membrane. It catalyses the reaction Zn(2+)(out) + 2 hydrogencarbonate(out) = Zn(2+)(in) + 2 hydrogencarbonate(in). The enzyme catalyses selenite(out) + Zn(2+)(out) + hydrogencarbonate(out) = selenite(in) + Zn(2+)(in) + hydrogencarbonate(in). The catalysed reaction is Mn(2+)(out) + 2 hydrogencarbonate(out) = Mn(2+)(in) + 2 hydrogencarbonate(in). It carries out the reaction Cd(2+)(out) + 2 hydrogencarbonate(out) = Cd(2+)(in) + 2 hydrogencarbonate(in). It catalyses the reaction Fe(2+)(out) + 2 hydrogencarbonate(out) = Fe(2+)(in) + 2 hydrogencarbonate(in). The enzyme catalyses Co(2+)(out) + 2 hydrogencarbonate(out) = Co(2+)(in) + 2 hydrogencarbonate(in). Functionally, electroneutral divalent metal cation:bicarbonate symporter of the plasma membrane mediating the cellular uptake of zinc and manganese, two divalent metal cations important for development, tissue homeostasis and immunity. Transports an electroneutral complex composed of a divalent metal cation and two bicarbonate anions or alternatively a bicarbonate and a selenite anion. Thereby, it also contributes to the cellular uptake of selenium, an essential trace metal and micronutrient. Also imports cadmium a non-essential metal which is cytotoxic and carcinogenic. May also transport iron and cobalt through membranes. Through zinc import, indirectly regulates the metal-dependent transcription factor MTF1 and the expression of some metalloproteases involved in cartilage catabolism and also probably heart development. Also indirectly regulates the expression of proteins involved in cell morphology and cytoskeleton organization. Indirectly controls innate immune function and inflammatory response by regulating zinc cellular uptake which in turn modulates the expression of genes specific of these processes. Protects, for instance, cells from injury and death at the onset of inflammation. By regulating zinc influx into monocytes also directly modulates their adhesion to endothelial cells and arteries. Reclaims manganese from the bile at the apical membrane of hepatocytes, thereby regulating the activity of the manganese-dependent enzymes through the systemic levels of the nutrient. Also participates in manganese reabsorption in the proximal tubule of the kidney. By mediating the extracellular uptake of manganese by cells of the blood-brain barrier, may also play a role in the transport of the micronutrient to the brain. With manganese cellular uptake also participates in mitochondrial proper function. Finally, also probably functions intracellularly, translocating zinc from lysosome to cytosol to indirectly enhance the expression of specific genes during TCR-mediated T cell activation. This Mus musculus (Mouse) protein is Metal cation symporter ZIP8.